We begin with the raw amino-acid sequence, 339 residues long: MALAQQLRSESDFEQLPDDVAVSANIADIEEKRGFTSHFVFVIEVKTKGGSKYLIYRRYRQFYALQSKLEERFGPESKNSPFTCSLPTLPAKVYMGAKQEIAETRIPALNAYMKNLLSLPVCVLMDPDVRIFFYQSAYDAEQVPQALRRLRPRTRKIKGVSPQGAIMDRMEAPRAEALFDFTGNSKLELSFKAGDVIFLLSKINKDWLEGTSQGATGIFPGSFVKILKDFPEDEDTTNWLRCYFYEDTGKTIKDIAVEEDLSSTPLFKDLLALMRREFQREDIALSYQDAEGDLVRLLSDEDVGLMVKQARGLPSQKRLFPWKLHVTQKDNYSVYNTVP.

The PX domain maps to 19–140 (DVAVSANIAD…IFFYQSAYDA (122 aa)). Residues 58-60 (RYR) and 92-94 (KVY) contribute to the a 1,2-diacyl-sn-glycero-3-phospho-(1D-myo-inositol-3-phosphate) site. A Phosphothreonine modification is found at threonine 154. The region spanning 170 to 229 (MEAPRAEALFDFTGNSKLELSFKAGDVIFLLSKINKDWLEGTSQGATGIFPGSFVKILKD) is the SH3 domain. The 93-residue stretch at 237–329 (TNWLRCYFYE…FPWKLHVTQK (93 aa)) folds into the PB1 domain. Serine 315 is subject to Phosphoserine.

As to quaternary structure, component of the phagocyte NADPH oxidase complex composed of an obligatory core heterodimer formed by the membrane proteins CYBA and CYBB and the cytosolic regulatory subunits NCF1/p47-phox, NCF2/p67-phox, NCF4/p40-phox and the small GTPase RAC1 or RAC2. Part of a cytosolic complex composed at least by NCF1, NCF2 and NCF4. Interacts with NCF2. Interacts with NCF1. The NCF2-NCF4 complex interacts with GBP7 (via GB1/RHD3-type G domain).

It is found in the cytoplasm. It localises to the cytosol. Its subcellular location is the endosome membrane. The protein localises to the membrane. Functionally, subunit of the phagocyte NADPH oxidase complex that mediates the transfer of electrons from cytosolic NADPH to O2 to produce the superoxide anion (O2(-)). In the activated complex, electrons are first transferred from NADPH to flavin adenine dinucleotide (FAD) and subsequently transferred via two heme molecules to molecular oxygen, producing superoxide through an outer-sphere reaction. Activation of the NADPH oxidase complex is initiated by the assembly of cytosolic subunits of the NADPH oxidase complex with the core NADPH oxidase complex to form a complex at the plasma membrane or phagosomal membrane. This activation process is initiated by phosphorylation dependent binding of the cytosolic NCF1/p47-phox subunit to the C-terminus of CYBA/p22-phox. The sequence is that of Neutrophil cytosol factor 4 from Mus musculus (Mouse).